A 350-amino-acid chain; its full sequence is WD repeat-containing protein DWA2 (350 aa).

WD repeat units lie at residues 39-79 (KEEN…FDQR), 118-158 (AHVG…KSAE), 166-205 (GMRH…KNNS), 206-246 (IERA…FPVQ), 250-290 (GHTH…EHKT), and 311-350 (DYED…LPRR).

As to quaternary structure, interacts with ABI5 and DDB1A and DWA1.

It is found in the nucleus. It participates in protein modification; protein ubiquitination. Its function is as follows. Component of the CUL4-RBX1-DDB1-DWA1/DWA2 E3 ubiquitin-protein ligase complex that acts as a negative regulator in abscisic acid (ABA) signaling. May function as the substrate recognition module within this complex leading to ABI5 degradation. Functionally redundant with DWA1. The sequence is that of WD repeat-containing protein DWA2 (DWA2) from Arabidopsis thaliana (Mouse-ear cress).